A 170-amino-acid polypeptide reads, in one-letter code: 3-hydroxydecanoyl-[acyl-carrier-protein] dehydratase (170 aa).

Residue His71 is part of the active site.

Belongs to the thioester dehydratase family. FabA subfamily. Homodimer.

The protein resides in the cytoplasm. It carries out the reaction a (3R)-hydroxyacyl-[ACP] = a (2E)-enoyl-[ACP] + H2O. The catalysed reaction is (3R)-hydroxydecanoyl-[ACP] = (2E)-decenoyl-[ACP] + H2O. The enzyme catalyses (2E)-decenoyl-[ACP] = (3Z)-decenoyl-[ACP]. Its pathway is lipid metabolism; fatty acid biosynthesis. Its function is as follows. Necessary for the introduction of cis unsaturation into fatty acids. Catalyzes the dehydration of (3R)-3-hydroxydecanoyl-ACP to E-(2)-decenoyl-ACP and then its isomerization to Z-(3)-decenoyl-ACP. Can catalyze the dehydratase reaction for beta-hydroxyacyl-ACPs with saturated chain lengths up to 16:0, being most active on intermediate chain length. The sequence is that of 3-hydroxydecanoyl-[acyl-carrier-protein] dehydratase from Chelativorans sp. (strain BNC1).